A 60-amino-acid chain; its full sequence is Large ribosomal subunit protein uL30 (60 aa).

The protein belongs to the universal ribosomal protein uL30 family. Part of the 50S ribosomal subunit.

In Cupriavidus metallidurans (strain ATCC 43123 / DSM 2839 / NBRC 102507 / CH34) (Ralstonia metallidurans), this protein is Large ribosomal subunit protein uL30.